Consider the following 309-residue polypeptide: UDP-N-acetylenolpyruvoylglucosamine reductase (309 aa).

An FAD-binding PCMH-type domain is found at 24–187; the sequence is RVGGPADWLF…TKAVFEAPRG (164 aa). The active site involves Arg-167. Residues 200-213 show a composition bias toward basic and acidic residues; sequence LARRDATQPTKERS. A disordered region spans residues 200–230; that stretch reads LARRDATQPTKERSAGSTFRNPAGFSSTGRS. Residues 214–228 are compositionally biased toward polar residues; that stretch reads AGSTFRNPAGFSSTG. The active-site Proton donor is Ser-216. Glu-298 is a catalytic residue.

This sequence belongs to the MurB family. It depends on FAD as a cofactor.

The protein localises to the cytoplasm. The enzyme catalyses UDP-N-acetyl-alpha-D-muramate + NADP(+) = UDP-N-acetyl-3-O-(1-carboxyvinyl)-alpha-D-glucosamine + NADPH + H(+). The protein operates within cell wall biogenesis; peptidoglycan biosynthesis. Its function is as follows. Cell wall formation. This is UDP-N-acetylenolpyruvoylglucosamine reductase from Roseobacter denitrificans (strain ATCC 33942 / OCh 114) (Erythrobacter sp. (strain OCh 114)).